A 1224-amino-acid polypeptide reads, in one-letter code: MEGGESTESTHNTKVSDSAYSNSCSNSQSQRSGSSKSRLSGSHSSGSSGYGGKPSTQASSSDMIIKRNKDKSRKKKKNKGAGQGAGQAQTLISASTSLEGRDEEKPRPSGTGCVEQQICRELQDQQHGEDHSEPQAIEQLQQEEEEDQSGSESEADRVEGVAKSEAAQSFPIPSPLSVTIVPPSMGGCGGVGHAAGLDSGLAKFDKTWEAGPGKLESMTGVGAAAAGTGQRGERVKEDSFCCVISMHDGIVLYTTPSITDVLGYPRDMWLGRSFIDFVHLKDRATFASQITTGIPIAESRGSVPKDAKSTFCVMLRRYRGLKSGGFGVIGRPVSYEPFRLGLTFREAPEEARPDNYMVSNGTNMLLVICATPIKSSYKVPDEILSQKSPKFAIRHTATGIISHVDSAAVSALGYLPQDLIGRSIMDFYHHEDLSVMKETYETVMKKGQTAGASFCSKPYRFLIQNGCYVLLETEWTSFVNPWSRKLEFVVGHHRVFQGPKQCNVFEAAPTCKLKISEEAQSRNTRIKEDIVKRLAETVSRPSDTVKQEVSRRCQALASFMETLMDEVSRADLKLELPHENELTVSERDSVMLGEISPHHDYYDSKSSTETPPSYNQLNYNENLLRFFNSKPVTAPAELDPPKTEPPEPRGTCVSGASGPMSPVHEGSGGSGSSGNFTTASNIHMSSVTNTSIAGTGGTGTGTGTGTGTGTGTGTGTGTGTGTGTGTGTGTGTGTGTGTGTGTGNGTNSGTGTGTASSSKGGTAAIPPVTLTESLLNKHNDEMEKFMLKKHRESRGRTGEKSKKSANDTLKMLEYSGPGHGIKRGGSHSWEGEANKPKQQLTLGTDAIKGAAGSAGGAVGTGGVGSGGAGVAGGGGSGTGVAGTPEGRATTTSGTGTPGGAGGGGGAGAAAAAGASSSVGSSTPGPSSYPTCTQNINLWPPFSVGITPPVHSTHTAMAQSSFSSAGLFPTFYYIPASLTPTSPTRSPRMHKHPHKGGTDMPTTSQQAAAAAAQAMPLQYMAGVMYPHPSLFYTHPAAAAATAMMYQPMPFPGMANALQIPERPLGSQSAYNKSVYTTTPASMTKKVPGAFHSVTTPAQVQRPSSQSASVKTEPGSSAAVSDPCKKEVPDSSPIPSVMGDYNSDPPCSSSNPANNKKYTDSNGNSDDMDGSSFSSFYSSFIKTTDGSESPPDTEKDPKHRKLKSMSTSESKIMEHPEEDQTQHGDG.

The span at 1–15 shows a compositional bias: polar residues; that stretch reads MEGGESTESTHNTKV. The tract at residues 1–175 is disordered; sequence MEGGESTEST…AAQSFPIPSP (175 aa). Residues 16-47 are compositionally biased toward low complexity; the sequence is SDSAYSNSCSNSQSQRSGSSKSRLSGSHSSGS. The Nuclear localization signal motif lies at 66-79; that stretch reads KRNKDKSRKKKKNK. The segment covering 66–79 has biased composition (basic residues); it reads KRNKDKSRKKKKNK. The segment covering 121–133 has biased composition (basic and acidic residues); the sequence is ELQDQQHGEDHSE. 2 PAS domains span residues 238–373 and 391–497; these read DSFC…ATPI and FAIR…RVFQ. Disordered regions lie at residues 632–764, 788–807, 874–927, 978–1008, and 1094–1224; these read VTAP…GTAA, KKHR…SAND, GGSG…GPSS, TPTS…QAAA, and TPAQ…HGDG. The segment covering 675 to 693 has biased composition (polar residues); the sequence is NFTTASNIHMSSVTNTSIA. 26 consecutive repeat copies span residues 694–695, 697–698, 699–700, 701–702, 703–704, 705–706, 707–708, 709–710, 711–712, 713–714, 715–716, 717–718, 719–720, 721–722, 723–724, 725–726, 727–728, 729–730, 731–732, 733–734, 735–736, 737–738, 739–740, 741–742, 743–744, and 745–746. The segment covering 694–752 has biased composition (gly residues); that stretch reads GTGGTGTGTGTGTGTGTGTGTGTGTGTGTGTGTGTGTGTGTGTGTGTGTGNGTNSGTGT. Residues 694 to 754 are 30 X 2 AA approximate tandem repeats of G-[TN]; it reads GTGGTGTGTG…GTNSGTGTGT (61 aa). A 27; approximate repeat occupies 747–748; the sequence is NS. Repeat copies occupy residues 749–750, 751–752, and 753–754. Residues 749-868 form a regulates the rhythm of species-specific courtship song region; sequence GTGTGTASSS…GTGGVGSGGA (120 aa). Positions 794-805 are enriched in basic and acidic residues; that stretch reads RGRTGEKSKKSA. The segment covering 895 to 907 has biased composition (gly residues); it reads GTPGGAGGGGGAG. The span at 908–927 shows a compositional bias: low complexity; the sequence is AAAAAGASSSVGSSTPGPSS. 2 stretches are compositionally biased toward polar residues: residues 1094–1117 and 1143–1154; these read TPAQ…SSAA and PPCSSSNPANNK. Residues 1158–1177 are compositionally biased toward low complexity; the sequence is DSNGNSDDMDGSSFSSFYSS. Over residues 1209–1224 the composition is skewed to basic and acidic residues; the sequence is KIMEHPEEDQTQHGDG.

In terms of assembly, forms a heterodimer with timeless (TIM); the complex then translocates into the nucleus. A proportion of the protein exists as homodimer. In terms of processing, phosphorylated with a circadian rhythmicity, probably by the double-time protein (dbt). Phosphorylation could be implicated in the stability of per monomer and in the formation of heterodimer per-tim. Expressed in neural tissues and in several nonneural tissues of the abdomen. Malpighian tubules contain a circadian pacemaker that functions independently of the brain. Expression oscillates in all tissues studied except for the ovary. PER-A isoforms are mainly expressed in adult's head.

The protein resides in the nucleus. The protein localises to the cytoplasm. It is found in the perinuclear region. Its subcellular location is the cytosol. Essential for biological clock functions. Determines the period length of circadian and ultradian rhythms; an increase in PER dosage leads to shortened circadian rhythms and a decrease leads to lengthened circadian rhythms. Essential for the circadian rhythmicity of locomotor activity, eclosion behavior, and for the rhythmic component of the male courtship song that originates in the thoracic nervous system. The biological cycle depends on the rhythmic formation and nuclear localization of the TIM-PER complex. Light induces the degradation of TIM, which promotes elimination of PER. Nuclear activity of the heterodimer coordinatively regulates PER and TIM transcription through a negative feedback loop. Behaves as a negative element in circadian transcriptional loop. Does not appear to bind DNA, suggesting indirect transcriptional inhibition. Required for binding of cwo to the E box regions in the promoters of target genes of the transcriptional activator Clock, probably by binding to Clock-cycle heterodimers, reducing their affinity for E box binding and allowing cwo to bind instead. The chain is Period circadian protein (per) from Drosophila melanogaster (Fruit fly).